The primary structure comprises 525 residues: Lysine--tRNA ligase (525 aa).

The 'HIGH' region signature appears at 44 to 52 (PSGLPHIGT). The 'KMSKS' region signature appears at 290–294 (KISKS). Residue K293 coordinates ATP.

It belongs to the class-I aminoacyl-tRNA synthetase family.

The protein localises to the cytoplasm. The catalysed reaction is tRNA(Lys) + L-lysine + ATP = L-lysyl-tRNA(Lys) + AMP + diphosphate. The sequence is that of Lysine--tRNA ligase from Rickettsia felis (strain ATCC VR-1525 / URRWXCal2) (Rickettsia azadi).